The chain runs to 1359 residues: Transcriptional regulator ATRX homolog (1359 aa).

The segment at 1–402 is disordered; that stretch reads MRVGVSESED…RAEKERRKRL (402 aa). The segment covering 11-49 has biased composition (basic and acidic residues); the sequence is SDGHVIEDEDLEMARQIENERKEKRAQKLKEKREREGKP. The segment covering 50–61 has biased composition (basic residues); it reads PPKKRPAKKRKA. Acidic residues predominate over residues 64 to 73; sequence SEEDDDDEEE. Basic residues-rich tracts occupy residues 77–86, 103–123, 139–149, 165–177, 194–204, and 219–229; these read KSSKKSRKRA, KSKSKKKVDQKKKEKSKKKRT, KSKKKSKKTKK, VKKSKKNKEKSVK, KKSKKGLKKKA, and KKSKKKSKKVV. Positions 257–271 are enriched in acidic residues; sequence ESSESEKSDEEEEEK. Residues 321–336 show a composition bias toward basic and acidic residues; the sequence is KDQKSESEASDVEEKV. Residues 347–357 show a composition bias toward low complexity; sequence SESGSDSSEGS. The span at 362-376 shows a compositional bias: basic residues; the sequence is RKSKKKEKPEKKKKG. A compositionally biased stretch (basic and acidic residues) spans 383-397; the sequence is KLQKETIDAERAEKE. Positions 483 to 685 constitute a Helicase ATP-binding domain; that stretch reads DRLDTEGSGG…HCMVNFVKPG (203 aa). 496–503 contributes to the ATP binding site; sequence HCMGLGKT. The short motif at 636 to 639 is the DEAH box element; that stretch reads DEAH. A disordered region spans residues 809–891; the sequence is RVMREDAEEE…NSDDEDEEDG (83 aa). Over residues 814 to 832 the composition is skewed to acidic residues; it reads DAEEEADFIDDGDGSESES. The span at 833-847 shows a compositional bias: low complexity; sequence EGSFKSGSESDSGKS. A Helicase C-terminal domain is found at 951-1134; that stretch reads LLVEIIKKCE…EAQIQRHYLG (184 aa).

It belongs to the SNF2/RAD54 helicase family.

Its subcellular location is the nucleus. It carries out the reaction ATP + H2O = ADP + phosphate + H(+). In terms of biological role, required for embryonic development and gonadogenesis. Also, functions redundantly with the transcriptional repressor lin-35 to regulate somatic gonad development. The chain is Transcriptional regulator ATRX homolog from Caenorhabditis elegans.